Here is an 882-residue protein sequence, read N- to C-terminus: Alanine--tRNA ligase (882 aa).

Zn(2+)-binding residues include H570, H574, C672, and H676.

It belongs to the class-II aminoacyl-tRNA synthetase family. Zn(2+) serves as cofactor.

It localises to the cytoplasm. It catalyses the reaction tRNA(Ala) + L-alanine + ATP = L-alanyl-tRNA(Ala) + AMP + diphosphate. Its function is as follows. Catalyzes the attachment of alanine to tRNA(Ala) in a two-step reaction: alanine is first activated by ATP to form Ala-AMP and then transferred to the acceptor end of tRNA(Ala). Also edits incorrectly charged Ser-tRNA(Ala) and Gly-tRNA(Ala) via its editing domain. The sequence is that of Alanine--tRNA ligase from Xanthomonas oryzae pv. oryzae (strain MAFF 311018).